The primary structure comprises 154 residues: MPTVTEGRLIAKGMKFGIAVSRFNDFICSRLLDGALDALTRSGAEGKDIQVYRVPGAFELPLVAKKLAVSQRFEAVICLGAVIRGATPHFEYVSAEVSKGIANASLDTGVPIAFGVLTTDTIEQAIERAGTKAGNKGWDAAMTAIEMVDLLRQI.

Residues Phe-23, Ala-57 to Glu-59, and Ala-81 to Ile-83 each bind 5-amino-6-(D-ribitylamino)uracil. Ala-86–Thr-87 contributes to the (2S)-2-hydroxy-3-oxobutyl phosphate binding site. His-89 serves as the catalytic Proton donor. Phe-114 is a binding site for 5-amino-6-(D-ribitylamino)uracil. Arg-128 is a (2S)-2-hydroxy-3-oxobutyl phosphate binding site.

This sequence belongs to the DMRL synthase family.

It carries out the reaction (2S)-2-hydroxy-3-oxobutyl phosphate + 5-amino-6-(D-ribitylamino)uracil = 6,7-dimethyl-8-(1-D-ribityl)lumazine + phosphate + 2 H2O + H(+). Its pathway is cofactor biosynthesis; riboflavin biosynthesis; riboflavin from 2-hydroxy-3-oxobutyl phosphate and 5-amino-6-(D-ribitylamino)uracil: step 1/2. Its function is as follows. Catalyzes the formation of 6,7-dimethyl-8-ribityllumazine by condensation of 5-amino-6-(D-ribitylamino)uracil with 3,4-dihydroxy-2-butanone 4-phosphate. This is the penultimate step in the biosynthesis of riboflavin. This is 6,7-dimethyl-8-ribityllumazine synthase from Syntrophus aciditrophicus (strain SB).